The primary structure comprises 502 residues: Mannitol 2-dehydrogenase (502 aa).

An NAD(+)-binding site is contributed by 37 to 48 (IVHIGVGGFHRA).

The protein belongs to the mannitol dehydrogenase family. In terms of assembly, monomer.

It carries out the reaction D-mannitol + NAD(+) = D-fructose + NADH + H(+). Catalyzes the NAD(H)-dependent interconversion of D-fructose and D-mannitol in the mannitol metabolic pathway. The sequence is that of Mannitol 2-dehydrogenase from Neosartorya fischeri (strain ATCC 1020 / DSM 3700 / CBS 544.65 / FGSC A1164 / JCM 1740 / NRRL 181 / WB 181) (Aspergillus fischerianus).